Consider the following 951-residue polypeptide: MAAAAAAAAAVGVRLRDCCSRGAVLLLFFSLSPRPPAAAAWLLGLRPEDTAGGRVSLEGGTLRAAEGTSFLLRVYFQPGPPATAAPVPSPTLNSGENGTGDWAPRLVFIEEPPGGGGVAPSAVPTRPPGPQRCREQSDWASDVEVLGPLRPGGVAGSALVQVRVRELRKGEAERGGAGGGGKLFSLCAWDGRAWHHHGAAGGFLLRVRPRLYGPGGDLLPPAWLRALGALLLLALSALFSGLRLSLLSLDPVELRVLRNSGSAAEQEQARRVQAVRGRGTHLLCTLLLGQAGANAALAGWLYTSLPPGFGGTGEDYSEEGIHFPWLPALVCTGAVFLGAEICPYSVCSRHGLAIASHSVCLTRLLMAAAFPVCYPLGRLLDWALRQEISTFYTREKLLETLRAADPYSDLVKEELNIIQGALELRTKVVEEVLTPLGDCFMLRSDAVLDFATVSEILRSGYTRIPVYEGDQRHNIVDILFVKDLAFVDPDDCTPLLTVTRFYNRPLHCVFNDTRLDTVLEEFKKGKSHLAIVQRVNNEGEGDPFYEVMGIVTLEDIIEEIIKSEILDETDLYTDNRKKQRVPQRERKRHDFSLFKLSDTEMRVKISPQLLLATHRFMATEVEPFKSLYLSEKILLRLLKHPNVIQELKFDEKNKKAPEHYLYQRNRPVDYFVLLLQGKVEVEVGKEGLRFENGAFTYYGVPAIMTTACSDNDVRKVGSLAGSSVFLNRSPSRCSGLNRSESPNRERSDFGGSNTQLYSSSNNLYMPDYSVHILSDVQFVKITRQQYQNALTACHMDSSPQSPDMEAFTDGDSTKAPTTRGTPQTPKDDPAITLLNNRNSLPCSRSDGLRSPSEVVYLRMEELAFTQEEMTDFEEHSTQQLTLSPAAVPTRAASDSECCNINLDTETSPCSSDFEENVGKKLLRTLSGQKRKRSPEGERTSEDNSNLTPLIT.

The helical transmembrane segment at 23–43 threads the bilayer; it reads AVLLLFFSLSPRPPAAAAWLL. The disordered stretch occupies residues 116-135; it reads GGVAPSAVPTRPPGPQRCRE. The CNNM transmembrane domain maps to 218 to 414; the sequence is LLPPAWLRAL…DPYSDLVKEE (197 aa). The next 3 membrane-spanning stretches (helical) occupy residues 222-242, 282-302, and 321-341; these read AWLR…FSGL, LLCT…GWLY, and IHFP…GAEI. 2 CBS domains span residues 433–495 and 502–568; these read LTPL…CTPL and YNRP…ILDE. 2 stretches are compositionally biased toward polar residues: residues 731–740 and 814–824; these read SRCSGLNRSE and KAPTTRGTPQT. Disordered stretches follow at residues 731–753 and 795–830; these read SRCS…GGSN and MDSS…DDPA. Phosphothreonine occurs at positions 821 and 824. At Ser850 the chain carries Phosphoserine. The segment at 920 to 951 is disordered; the sequence is KLLRTLSGQKRKRSPEGERTSEDNSNLTPLIT. Over residues 942–951 the composition is skewed to polar residues; sequence DNSNLTPLIT.

Belongs to the ACDP family. Restricted to brain and testis.

The protein resides in the cell membrane. Its function is as follows. Probable metal transporter. This is Metal transporter CNNM1 (CNNM1) from Homo sapiens (Human).